Reading from the N-terminus, the 699-residue chain is Macoilin-2 (699 aa).

The next 4 helical transmembrane spans lie at 28 to 48 (TFLYLKFLVVWALVLLADFVL), 75 to 95 (AFSVFFVCVAFTSDIICLLFI), 120 to 140 (VCLPTVSLWILFVYIEAAIRF), and 154 to 174 (FAAHCIGYPVVTLGFGFKSYV). Disordered stretches follow at residues 219–289 (AAAA…SILP), 322–411 (LLKD…PNNQ), 432–451 (LQASRQTEQDLRSQLGSLGT), and 679–699 (FMDTSPSGLDPNASVYQPLKK). 4 N-linked (GlcNAc...) asparagine glycosylation sites follow: asparagine 241, asparagine 267, asparagine 345, and asparagine 365. Positions 257–271 (LEYREKERGKNESKK) are enriched in basic and acidic residues. The segment covering 329–346 (SSSSSSTSSNSNKNYKNA) has biased composition (low complexity). Residues 366-382 (GSVPSSSGPSSSASSSS) show a composition bias toward low complexity. An N-linked (GlcNAc...) asparagine glycan is attached at asparagine 690.

Belongs to the macoilin family.

The protein localises to the nucleus membrane. It localises to the cell projection. The protein resides in the axon. Its subcellular location is the rough endoplasmic reticulum membrane. May play a role in the regulation of neuronal activity. The protein is Macoilin-2 of Danio rerio (Zebrafish).